The primary structure comprises 83 residues: Hepcidin-2 (83 aa).

The N-terminal stretch at 1 to 26 (MALSTRTQAACLLLLLLASLSSTTYL) is a signal peptide. The propeptide occupies 27–53 (QQQMRQTTELQPLHGEESRADIAIPMQ). Intrachain disulfides connect C65-C81, C68-C71, C69-C77, and C72-C80.

The protein belongs to the hepcidin family. As to expression, highly expressed in the liver and to a much lesser extent in the heart. Also expressed in pancreas.

It localises to the secreted. Seems to act as a signaling molecule involved in the maintenance of iron homeostasis. The protein is Hepcidin-2 (Hamp2) of Mus musculus (Mouse).